Reading from the N-terminus, the 406-residue chain is DNA primase DnaG (406 aa).

Residues 167-253 (DAVVIVEGRA…CVEDLSRRTV (87 aa)) form the Toprim domain. 3 residues coordinate Mg(2+): glutamate 173, aspartate 215, and aspartate 217. The segment at 259 to 309 (NKTPASAAAPIATTQSETAATDGSATPAPTPEPAPDTAPSPDSDGDDTEAA) is disordered. Residues 261-272 (TPASAAAPIATT) show a composition bias toward low complexity. Positions 286-296 (APTPEPAPDTA) are enriched in pro residues.

It belongs to the archaeal DnaG primase family. As to quaternary structure, forms a ternary complex with MCM helicase and DNA. Requires Mg(2+) as cofactor.

It carries out the reaction ssDNA + n NTP = ssDNA/pppN(pN)n-1 hybrid + (n-1) diphosphate.. In terms of biological role, RNA polymerase that catalyzes the synthesis of short RNA molecules used as primers for DNA polymerase during DNA replication. This chain is DNA primase DnaG, found in Halobacterium salinarum (strain ATCC 29341 / DSM 671 / R1).